The chain runs to 543 residues: Probable ubiquitin-conjugating enzyme E2 26 (543 aa).

The interval 1–21 (MEPDVVEIPPPPLIASGSRTR) is disordered. The UBC core domain occupies 271 to 431 (NWVKKVQADW…VFLLSLKTMV (161 aa)). The Glycyl thioester intermediate role is filled by cysteine 357. The disordered stretch occupies residues 514 to 543 (LAEKPEPPMSNANTENQSKKKTRKRSRSSR). The segment covering 532-543 (KKKTRKRSRSSR) has biased composition (basic residues).

This sequence belongs to the ubiquitin-conjugating enzyme family.

The catalysed reaction is S-ubiquitinyl-[E1 ubiquitin-activating enzyme]-L-cysteine + [E2 ubiquitin-conjugating enzyme]-L-cysteine = [E1 ubiquitin-activating enzyme]-L-cysteine + S-ubiquitinyl-[E2 ubiquitin-conjugating enzyme]-L-cysteine.. The protein operates within protein modification; protein ubiquitination. Functionally, accepts the ubiquitin from the E1 complex and catalyzes its covalent attachment to other proteins. The chain is Probable ubiquitin-conjugating enzyme E2 26 (UBC26) from Arabidopsis thaliana (Mouse-ear cress).